The primary structure comprises 724 residues: uncharacterized protein (724 aa).

Disordered regions lie at residues 1–23 (MEDR…IPDN), 166–477 (PDGY…PPRD), 496–517 (EAHD…AHGP), and 532–691 (DHPI…PALS). Composition is skewed to polar residues over residues 227-245 (VSQS…TVNQ) and 270-296 (STTL…TSDA). The segment covering 304-322 (TRDHDRYGNGRGPDTDRLE) has biased composition (basic and acidic residues). Residues 403–413 (PSSSHSETPNM) are compositionally biased toward polar residues. Composition is skewed to basic and acidic residues over residues 550 to 560 (RNHEFTEDKRL) and 637 to 657 (LRHD…DLAA). The segment covering 682-691 (RLAAASPALS) has biased composition (low complexity).

This is an uncharacterized protein from Neurospora crassa (strain ATCC 24698 / 74-OR23-1A / CBS 708.71 / DSM 1257 / FGSC 987).